We begin with the raw amino-acid sequence, 332 residues long: Methylthioribose-1-phosphate isomerase (332 aa).

Residues 44–46, Arg87, and Gln192 contribute to the substrate site; that span reads RGA. Asp233 functions as the Proton donor in the catalytic mechanism. Residue 243–244 coordinates substrate; that stretch reads NK.

It belongs to the eIF-2B alpha/beta/delta subunits family. MtnA subfamily.

It catalyses the reaction 5-(methylsulfanyl)-alpha-D-ribose 1-phosphate = 5-(methylsulfanyl)-D-ribulose 1-phosphate. It participates in amino-acid biosynthesis; L-methionine biosynthesis via salvage pathway; L-methionine from S-methyl-5-thio-alpha-D-ribose 1-phosphate: step 1/6. In terms of biological role, catalyzes the interconversion of methylthioribose-1-phosphate (MTR-1-P) into methylthioribulose-1-phosphate (MTRu-1-P). The chain is Methylthioribose-1-phosphate isomerase from Dehalococcoides mccartyi (strain CBDB1).